Reading from the N-terminus, the 364-residue chain is Tubulin alpha-2 chain (364 aa).

GTP-binding residues include G59, T60, T94, N121, and N144. The active site involves E170.

It belongs to the tubulin family. As to quaternary structure, dimer of alpha and beta chains. A typical microtubule is a hollow water-filled tube with an outer diameter of 25 nm and an inner diameter of 15 nM. Alpha-beta heterodimers associate head-to-tail to form protofilaments running lengthwise along the microtubule wall with the beta-tubulin subunit facing the microtubule plus end conferring a structural polarity. Microtubules usually have 13 protofilaments but different protofilament numbers can be found in some organisms and specialized cells. Mg(2+) serves as cofactor. Undergoes a tyrosination/detyrosination cycle, the cyclic removal and re-addition of a C-terminal tyrosine residue by the enzymes tubulin tyrosine carboxypeptidase (TTCP) and tubulin tyrosine ligase (TTL), respectively.

Its subcellular location is the cytoplasm. The protein resides in the cytoskeleton. It catalyses the reaction GTP + H2O = GDP + phosphate + H(+). Functionally, tubulin is the major constituent of microtubules, a cylinder consisting of laterally associated linear protofilaments composed of alpha- and beta-tubulin heterodimers. Microtubules grow by the addition of GTP-tubulin dimers to the microtubule end, where a stabilizing cap forms. Below the cap, tubulin dimers are in GDP-bound state, owing to GTPase activity of alpha-tubulin. The chain is Tubulin alpha-2 chain (TUBA2) from Anemia phyllitidis (Fern).